The chain runs to 523 residues: 2-isopropylmalate synthase (523 aa).

One can recognise a Pyruvate carboxyltransferase domain in the interval 5–267 (VIIFDTTLRD…HTRINHQEIW (263 aa)). The Mn(2+) site is built by Asp14, His202, His204, and Asn238. Residues 392 to 523 (RLEYFSVQSG…QNKEHNQETV (132 aa)) are regulatory domain.

It belongs to the alpha-IPM synthase/homocitrate synthase family. LeuA type 1 subfamily. As to quaternary structure, homodimer. Mn(2+) is required as a cofactor.

Its subcellular location is the cytoplasm. It catalyses the reaction 3-methyl-2-oxobutanoate + acetyl-CoA + H2O = (2S)-2-isopropylmalate + CoA + H(+). Its pathway is amino-acid biosynthesis; L-leucine biosynthesis; L-leucine from 3-methyl-2-oxobutanoate: step 1/4. Catalyzes the condensation of the acetyl group of acetyl-CoA with 3-methyl-2-oxobutanoate (2-ketoisovalerate) to form 3-carboxy-3-hydroxy-4-methylpentanoate (2-isopropylmalate). This chain is 2-isopropylmalate synthase, found in Cronobacter sakazakii (strain ATCC BAA-894) (Enterobacter sakazakii).